Here is a 96-residue protein sequence, read N- to C-terminus: Large ribosomal subunit protein uL15 (96 aa).

The protein belongs to the universal ribosomal protein uL15 family. Part of the 50S ribosomal subunit.

Its function is as follows. Binds to the 23S rRNA. This is Large ribosomal subunit protein uL15 (rplO) from Streptomyces scabiei.